A 141-amino-acid polypeptide reads, in one-letter code: Large ribosomal subunit protein uL16 (141 aa).

It belongs to the universal ribosomal protein uL16 family. In terms of assembly, part of the 50S ribosomal subunit.

Binds 23S rRNA and is also seen to make contacts with the A and possibly P site tRNAs. The sequence is that of Large ribosomal subunit protein uL16 from Geobacillus thermodenitrificans (strain NG80-2).